The sequence spans 409 residues: SPI-1 type 3 secretion system translocon protein SctB (409 aa).

Residues 119–140 (ISGMSSSAVALLAAANTLMLTL) form a helical membrane-spanning segment.

This sequence belongs to the SctB/SipC family. The core secretion machinery of the T3SS is composed of approximately 20 different proteins, including cytoplasmic components, a base, an export apparatus and a needle. This subunit is involved in the formation of a pore, called the translocon, in host membrane.

It is found in the secreted. It localises to the host membrane. Its function is as follows. Component of the type III secretion system 1 (SPI-1 T3SS), also called injectisome, which is used to inject bacterial effector proteins into eukaryotic host cells. SipB/SctE1 and SipC/SctB1 are inserted into the host membrane where they form a pore and allow the translocation of effector proteins into the cytosol of target cells. This is SPI-1 type 3 secretion system translocon protein SctB from Salmonella typhimurium (strain 14028s / SGSC 2262).